A 212-amino-acid chain; its full sequence is Pyridoxine/pyridoxamine 5'-phosphate oxidase (212 aa).

Residues 7-10 (RREY) and Lys66 contribute to the substrate site. Residues 61 to 66 (RIVLLK), 76 to 77 (YT), Arg82, Lys83, and Gln105 contribute to the FMN site. Substrate contacts are provided by Tyr123, Arg127, and Ser131. Residues 140-141 (QS) and Trp185 contribute to the FMN site. 191 to 193 (RLH) contributes to the substrate binding site. Arg195 contributes to the FMN binding site.

The protein belongs to the pyridoxamine 5'-phosphate oxidase family. In terms of assembly, homodimer. The cofactor is FMN.

The enzyme catalyses pyridoxamine 5'-phosphate + O2 + H2O = pyridoxal 5'-phosphate + H2O2 + NH4(+). It carries out the reaction pyridoxine 5'-phosphate + O2 = pyridoxal 5'-phosphate + H2O2. The protein operates within cofactor metabolism; pyridoxal 5'-phosphate salvage; pyridoxal 5'-phosphate from pyridoxamine 5'-phosphate: step 1/1. Its pathway is cofactor metabolism; pyridoxal 5'-phosphate salvage; pyridoxal 5'-phosphate from pyridoxine 5'-phosphate: step 1/1. Its function is as follows. Catalyzes the oxidation of either pyridoxine 5'-phosphate (PNP) or pyridoxamine 5'-phosphate (PMP) into pyridoxal 5'-phosphate (PLP). This Hahella chejuensis (strain KCTC 2396) protein is Pyridoxine/pyridoxamine 5'-phosphate oxidase.